We begin with the raw amino-acid sequence, 249 residues long: MNNTIETILNHRSIRSFTDQLLTAEEIDTLVKSAQAASTSSYVQAYSIIGVSDPEKKRELSVLAGNQPYVEKNGHFFVFCADLYRHQQLAEEKGEHISELLENTEMFMVSLIDAALAAQNMSIAAESMGLGICYIGGIRNELDKVTEVLQTPDHVLPLFGLAVGHPANLSGKKPRLPKQAVYHENTYNVNTDDFRHTMNTYDKTISDYYRERTNGKREETWSDQILNFMKQKPRTYLNDYVKEKGFNKN.

This sequence belongs to the flavin oxidoreductase frp family. In terms of assembly, homodimer.

The catalysed reaction is FMNH2 + NADP(+) = FMN + NADPH + 2 H(+). Reduces FMNH(2) to FMN, with NADPH as reductant. It also reduces nitroaromatic compounds, quinones and azo dyes. The polypeptide is FMN reductase (NADPH) (nfrA1) (Bacillus subtilis (strain 168)).